The chain runs to 95 residues: Aspartyl/glutamyl-tRNA(Asn/Gln) amidotransferase subunit C (95 aa).

The protein belongs to the GatC family. As to quaternary structure, heterotrimer of A, B and C subunits.

It carries out the reaction L-glutamyl-tRNA(Gln) + L-glutamine + ATP + H2O = L-glutaminyl-tRNA(Gln) + L-glutamate + ADP + phosphate + H(+). The enzyme catalyses L-aspartyl-tRNA(Asn) + L-glutamine + ATP + H2O = L-asparaginyl-tRNA(Asn) + L-glutamate + ADP + phosphate + 2 H(+). Its function is as follows. Allows the formation of correctly charged Asn-tRNA(Asn) or Gln-tRNA(Gln) through the transamidation of misacylated Asp-tRNA(Asn) or Glu-tRNA(Gln) in organisms which lack either or both of asparaginyl-tRNA or glutaminyl-tRNA synthetases. The reaction takes place in the presence of glutamine and ATP through an activated phospho-Asp-tRNA(Asn) or phospho-Glu-tRNA(Gln). The polypeptide is Aspartyl/glutamyl-tRNA(Asn/Gln) amidotransferase subunit C (Bradyrhizobium sp. (strain ORS 278)).